Here is a 381-residue protein sequence, read N- to C-terminus: Creatine kinase M-type (381 aa).

Positions 11-98 constitute a Phosphagen kinase N-terminal domain; sequence KLNYKSEEEY…FDPIIQDRHG (88 aa). One can recognise a Phosphagen kinase C-terminal domain in the interval 125–367; that stretch reads YVLSSRVRTG…KLMVEMEKKL (243 aa). 128–132 contacts ATP; sequence SSRVR. A Phosphoserine modification is found at Ser164. Thr166 carries the post-translational modification Phosphothreonine. At Ser178 the chain carries Phosphoserine. Thr180 bears the Phosphothreonine mark. His191 is a binding site for ATP. Residue Ser199 is modified to Phosphoserine. Arg236 and Arg292 together coordinate ATP. Phosphothreonine is present on residues Thr313 and Thr322. 320 to 325 provides a ligand contact to ATP; the sequence is RGTGGV. Ser372 is subject to Phosphoserine.

It belongs to the ATP:guanido phosphotransferase family. As to quaternary structure, dimer of identical or non-identical chains, which can be either B (brain type) or M (muscle type). With MM being the major form in skeletal muscle and myocardium, MB existing in myocardium, and BB existing in many tissues, especially brain.

The enzyme catalyses creatine + ATP = N-phosphocreatine + ADP + H(+). Its function is as follows. Reversibly catalyzes the transfer of phosphate between ATP and various phosphogens (e.g. creatine phosphate). Creatine kinase isoenzymes play a central role in energy transduction in tissues with large, fluctuating energy demands, such as skeletal muscle, heart, brain and spermatozoa. The polypeptide is Creatine kinase M-type (CKM) (Oryctolagus cuniculus (Rabbit)).